We begin with the raw amino-acid sequence, 1435 residues long: Gag-Pol polyprotein (1435 aa).

The N-myristoyl glycine; by host moiety is linked to residue G2. Residues 7–31 (VLSGGKLDKWEKIRLRPGGKKKYRL) form an interaction with Gp41 region. Residues 8–43 (LSGGKLDKWEKIRLRPGGKKKYRLKHIVWASRELER) are interaction with host CALM1. Residues 12–19 (KLDKWEKI) are interaction with host AP3D1. Residues 14–33 (DKWEKIRLRPGGKKKYRLKH) form an interaction with membrane phosphatidylinositol 4,5-bisphosphate and RNA region. Positions 16-22 (WEKIRLR) match the Nuclear export signal motif. The Nuclear localization signal signature appears at 26–32 (KKKYRLK). The segment at 73-77 (EELRS) is interaction with membrane phosphatidylinositol 4,5-bisphosphate. Positions 102-128 (EKMEEEQNKSKKKAQQAAADTGNNSQV) are disordered. Y132 carries the phosphotyrosine; by host modification. The tract at residues 189–227 (NTVGGHQAAMQMLKETINEEAAEWDRLHPVHAGPIAPGQ) is interaction with human PPIA/CYPA and NUP153. The segment at 277-363 (YSPVSILDIR…GGPSHKARVL (87 aa)) is dimerization/Multimerization of capsid protein p24. 2 CCHC-type zinc fingers span residues 391–408 (IKCF…NCRA) and 412–429 (KGCW…DCTE). The interval 489 to 493 (PQITL) is dimerization of protease. One can recognise a Peptidase A2 domain in the interval 508–577 (KEALLDTGAD…TPVNIIGRNL (70 aa)). Catalysis depends on D513, which acts as the For protease activity; shared with dimeric partner. Dimerization of protease stretches follow at residues 537–543 (GIGGFIK) and 576–588 (NLLT…LNFP). A Reverse transcriptase domain is found at 631 to 821 (EGKISRIGPE…PPFLWMGYEL (191 aa)). Positions 697, 772, and 773 each coordinate Mg(2+). The RT 'primer grip' stretch occupies residues 814–822 (FLWMGYELH). Positions 985 to 1001 (WETWWAEYWQATWIPEW) match the Tryptophan repeat motif motif. The RNase H type-1 domain occupies 1021-1144 (IIGAETFYVD…VDKLVSQGIR (124 aa)). Residues D1030, E1065, D1085, and D1136 each contribute to the Mg(2+) site. The Integrase-type zinc finger occupies 1150–1191 (DGIDKAQEEHEKYHNNWRAMASDFNLPPVVAKEIVASCDKCQ). Zn(2+)-binding residues include H1159, H1163, C1187, and C1190. One can recognise an Integrase catalytic domain in the interval 1201–1351 (VDCSPGIWQL…SAGERIIDII (151 aa)). The Mg(2+) site is built by D1211, D1263, and E1299. The integrase-type DNA-binding region spans 1370 to 1417 (FRVYYRDSRDPIWKGPAKLLWKGEGAVVIQDKSDIKVVPRRKVKIIRD).

Homotrimer; further assembles as hexamers of trimers. Interacts with gp41 (via C-terminus). Interacts with host CALM1; this interaction induces a conformational change in the Matrix protein, triggering exposure of the myristate group. Interacts with host AP3D1; this interaction allows the polyprotein trafficking to multivesicular bodies during virus assembly. Part of the pre-integration complex (PIC) which is composed of viral genome, matrix protein, Vpr and integrase. As to quaternary structure, homodimer; the homodimer further multimerizes as homohexamers or homopentamers. Interacts with human PPIA/CYPA; This interaction stabilizes the capsid. Interacts with human NUP153. Interacts with host PDZD8; this interaction stabilizes the capsid. Interacts with monkey TRIM5; this interaction destabilizes the capsid. In terms of assembly, homodimer, whose active site consists of two apposed aspartic acid residues. Heterodimer of p66 RT and p51 RT (RT p66/p51). Heterodimerization of RT is essential for DNA polymerase activity. The overall folding of the subdomains is similar in p66 RT and p51 RT but the spatial arrangements of the subdomains are dramatically different. As to quaternary structure, homotetramer; may further associate as a homohexadecamer. Part of the pre-integration complex (PIC) which is composed of viral genome, matrix protein, Vpr and integrase. Interacts with human SMARCB1/INI1 and human PSIP1/LEDGF isoform 1. Interacts with human KPNA3; this interaction might play a role in nuclear import of the pre-integration complex. Interacts with human NUP153; this interaction might play a role in nuclear import of the pre-integration complex. It depends on Mg(2+) as a cofactor. Post-translationally, specific enzymatic cleavages by the viral protease yield mature proteins. The protease is released by autocatalytic cleavage. The polyprotein is cleaved during and after budding, this process is termed maturation. Proteolytic cleavage of p66 RT removes the RNase H domain to yield the p51 RT subunit. Nucleocapsid protein p7 might be further cleaved after virus entry. Tyrosine phosphorylated presumably in the virion by a host kinase. Phosphorylation is apparently not a major regulator of membrane association. In terms of processing, phosphorylated possibly by host MAPK1; this phosphorylation is necessary for Pin1-mediated virion uncoating. Post-translationally, methylated by host PRMT6, impairing its function by reducing RNA annealing and the initiation of reverse transcription.

It localises to the host cell membrane. The protein resides in the host endosome. Its subcellular location is the host multivesicular body. The protein localises to the virion membrane. It is found in the host nucleus. It localises to the host cytoplasm. The protein resides in the virion. It carries out the reaction Specific for a P1 residue that is hydrophobic, and P1' variable, but often Pro.. It catalyses the reaction Endohydrolysis of RNA in RNA/DNA hybrids. Three different cleavage modes: 1. sequence-specific internal cleavage of RNA. Human immunodeficiency virus type 1 and Moloney murine leukemia virus enzymes prefer to cleave the RNA strand one nucleotide away from the RNA-DNA junction. 2. RNA 5'-end directed cleavage 13-19 nucleotides from the RNA end. 3. DNA 3'-end directed cleavage 15-20 nucleotides away from the primer terminus.. The catalysed reaction is 3'-end directed exonucleolytic cleavage of viral RNA-DNA hybrid.. The enzyme catalyses DNA(n) + a 2'-deoxyribonucleoside 5'-triphosphate = DNA(n+1) + diphosphate. With respect to regulation, protease: The viral protease is inhibited by many synthetic protease inhibitors (PIs), such as amprenavir, atazanavir, indinavir, loprinavir, nelfinavir, ritonavir and saquinavir. Use of protease inhibitors in tritherapy regimens permit more ambitious therapeutic strategies. Reverse transcriptase/ribonuclease H: RT can be inhibited either by nucleoside RT inhibitors (NRTIs) or by non nucleoside RT inhibitors (NNRTIs). NRTIs act as chain terminators, whereas NNRTIs inhibit DNA polymerization by binding a small hydrophobic pocket near the RT active site and inducing an allosteric change in this region. Classical NRTIs are abacavir, adefovir (PMEA), didanosine (ddI), lamivudine (3TC), stavudine (d4T), tenofovir (PMPA), zalcitabine (ddC), and zidovudine (AZT). Classical NNRTIs are atevirdine (BHAP U-87201E), delavirdine, efavirenz (DMP-266), emivirine (I-EBU), and nevirapine (BI-RG-587). The tritherapies used as a basic effective treatment of AIDS associate two NRTIs and one NNRTI. Its function is as follows. Mediates, with Gag polyprotein, the essential events in virion assembly, including binding the plasma membrane, making the protein-protein interactions necessary to create spherical particles, recruiting the viral Env proteins, and packaging the genomic RNA via direct interactions with the RNA packaging sequence (Psi). Gag-Pol polyprotein may regulate its own translation, by the binding genomic RNA in the 5'-UTR. At low concentration, the polyprotein would promote translation, whereas at high concentration, the polyprotein would encapsidate genomic RNA and then shut off translation. In terms of biological role, targets the polyprotein to the plasma membrane via a multipartite membrane-binding signal, that includes its myristoylated N-terminus. Matrix protein is part of the pre-integration complex. Implicated in the release from host cell mediated by Vpu. Binds to RNA. Functionally, forms the conical core that encapsulates the genomic RNA-nucleocapsid complex in the virion. Most core are conical, with only 7% tubular. The core is constituted by capsid protein hexamer subunits. The core is disassembled soon after virion entry. Host restriction factors such as TRIM5-alpha or TRIMCyp bind retroviral capsids and cause premature capsid disassembly, leading to blocks in reverse transcription. Capsid restriction by TRIM5 is one of the factors which restricts HIV-1 to the human species. Host PIN1 apparently facilitates the virion uncoating. On the other hand, interactions with PDZD8 or CYPA stabilize the capsid. Encapsulates and protects viral dimeric unspliced genomic RNA (gRNA). Binds these RNAs through its zinc fingers. Acts as a nucleic acid chaperone which is involved in rearangement of nucleic acid secondary structure during gRNA retrotranscription. Also facilitates template switch leading to recombination. As part of the polyprotein, participates in gRNA dimerization, packaging, tRNA incorporation and virion assembly. Its function is as follows. Aspartyl protease that mediates proteolytic cleavages of Gag and Gag-Pol polyproteins during or shortly after the release of the virion from the plasma membrane. Cleavages take place as an ordered, step-wise cascade to yield mature proteins. This process is called maturation. Displays maximal activity during the budding process just prior to particle release from the cell. Also cleaves Nef and Vif, probably concomitantly with viral structural proteins on maturation of virus particles. Hydrolyzes host EIF4GI and PABP1 in order to shut off the capped cellular mRNA translation. The resulting inhibition of cellular protein synthesis serves to ensure maximal viral gene expression and to evade host immune response. Also mediates cleavage of host YTHDF3. Mediates cleavage of host CARD8, thereby activating the CARD8 inflammasome, leading to the clearance of latent HIV-1 in patient CD4(+) T-cells after viral reactivation; in contrast, HIV-1 can evade CARD8-sensing when its protease remains inactive in infected cells prior to viral budding. In terms of biological role, multifunctional enzyme that converts the viral RNA genome into dsDNA in the cytoplasm, shortly after virus entry into the cell. This enzyme displays a DNA polymerase activity that can copy either DNA or RNA templates, and a ribonuclease H (RNase H) activity that cleaves the RNA strand of RNA-DNA heteroduplexes in a partially processive 3' to 5' endonucleasic mode. Conversion of viral genomic RNA into dsDNA requires many steps. A tRNA(3)-Lys binds to the primer-binding site (PBS) situated at the 5'-end of the viral RNA. RT uses the 3' end of the tRNA primer to perform a short round of RNA-dependent minus-strand DNA synthesis. The reading proceeds through the U5 region and ends after the repeated (R) region which is present at both ends of viral RNA. The portion of the RNA-DNA heteroduplex is digested by the RNase H, resulting in a ssDNA product attached to the tRNA primer. This ssDNA/tRNA hybridizes with the identical R region situated at the 3' end of viral RNA. This template exchange, known as minus-strand DNA strong stop transfer, can be either intra- or intermolecular. RT uses the 3' end of this newly synthesized short ssDNA to perform the RNA-dependent minus-strand DNA synthesis of the whole template. RNase H digests the RNA template except for two polypurine tracts (PPTs) situated at the 5'-end and near the center of the genome. It is not clear if both polymerase and RNase H activities are simultaneous. RNase H probably can proceed both in a polymerase-dependent (RNA cut into small fragments by the same RT performing DNA synthesis) and a polymerase-independent mode (cleavage of remaining RNA fragments by free RTs). Secondly, RT performs DNA-directed plus-strand DNA synthesis using the PPTs that have not been removed by RNase H as primers. PPTs and tRNA primers are then removed by RNase H. The 3' and 5' ssDNA PBS regions hybridize to form a circular dsDNA intermediate. Strand displacement synthesis by RT to the PBS and PPT ends produces a blunt ended, linear dsDNA copy of the viral genome that includes long terminal repeats (LTRs) at both ends. Functionally, catalyzes viral DNA integration into the host chromosome, by performing a series of DNA cutting and joining reactions. This enzyme activity takes place after virion entry into a cell and reverse transcription of the RNA genome in dsDNA. The first step in the integration process is 3' processing. This step requires a complex comprising the viral genome, matrix protein, Vpr and integrase. This complex is called the pre-integration complex (PIC). The integrase protein removes 2 nucleotides from each 3' end of the viral DNA, leaving recessed CA OH's at the 3' ends. In the second step, the PIC enters cell nucleus. This process is mediated through integrase and Vpr proteins, and allows the virus to infect a non dividing cell. This ability to enter the nucleus is specific of lentiviruses, other retroviruses cannot and rely on cell division to access cell chromosomes. In the third step, termed strand transfer, the integrase protein joins the previously processed 3' ends to the 5' ends of strands of target cellular DNA at the site of integration. The 5'-ends are produced by integrase-catalyzed staggered cuts, 5 bp apart. A Y-shaped, gapped, recombination intermediate results, with the 5'-ends of the viral DNA strands and the 3' ends of target DNA strands remaining unjoined, flanking a gap of 5 bp. The last step is viral DNA integration into host chromosome. This involves host DNA repair synthesis in which the 5 bp gaps between the unjoined strands are filled in and then ligated. Since this process occurs at both cuts flanking the HIV genome, a 5 bp duplication of host DNA is produced at the ends of HIV-1 integration. Alternatively, Integrase may catalyze the excision of viral DNA just after strand transfer, this is termed disintegration. The chain is Gag-Pol polyprotein (gag-pol) from Human immunodeficiency virus type 1 group M subtype D (isolate ELI) (HIV-1).